The sequence spans 150 residues: Galactose-binding lectin (150 aa).

Residues histidine 16 and glycine 19 each coordinate D-galactose. N-linked (GlcNAc...) asparagine glycosylation occurs at asparagine 26. D-galactose is bound by residues aspartate 27, aspartate 35–histidine 37, histidine 64, and glycine 67. A glycan (N-linked (GlcNAc...) asparagine) is linked at asparagine 74. Residues glutamate 75, aspartate 83 to histidine 85, histidine 108, and glycine 111 each bind D-galactose. Residue asparagine 118 is glycosylated (N-linked (GlcNAc...) asparagine). D-galactose is bound by residues glutamate 119 and aspartate 127 to histidine 129.

In terms of assembly, homodimer. Likely to form large oligomers; oligomerization enhances hemagglutination activity. In terms of processing, glycosylated.

Its activity is regulated as follows. Hemagglutination activity is not dependent on divalent cations. Hemagglutination activity is highly inhibited by D-galactose and N-acetyl-D-galactosamine, and to a lesser extent by raffinose. Also inhibited by melibiose and alpha-lactose, but not by beta-lactose or D-glucose. In terms of biological role, D-galactose-binding lectin. Also binds N-acetyl-D-galactosamine. Has hemagglutination activity towards all types of human erythrocytes (O, A and B) and rabbit erythrocytes. Agglutinates Gram-negative and Gram-positive bacteria including E.coli DH5-alpha and L.plantarum ATCC8014, respectively, and has bacteriostatic activity against them. Also agglutinates M.lysodeikticus. May be involved in innate immunity by recognizing and eliminating pathogens. This Mytilus californianus (California mussel) protein is Galactose-binding lectin.